We begin with the raw amino-acid sequence, 361 residues long: Holliday junction branch migration complex subunit RuvB (361 aa).

The segment at 1–181 is large ATPase domain (RuvB-L); the sequence is MKDQRLLDSV…FGIPIRLNFY (181 aa). ATP-binding positions include Leu20, Arg21, Gly62, Lys65, Thr66, Thr67, 128 to 130, Arg171, Tyr181, and Arg218; that span reads EDY. Thr66 contacts Mg(2+). Residues 182-252 are small ATPAse domain (RuvB-S); it reads TIEELEYIVQ…VADEALSRLE (71 aa). The head domain (RuvB-H) stretch occupies residues 255 to 361; sequence HLGLDPLDRR…QTTLWDEADE (107 aa). 3 residues coordinate DNA: Arg291, Arg310, and Arg315.

This sequence belongs to the RuvB family. As to quaternary structure, homohexamer. Forms an RuvA(8)-RuvB(12)-Holliday junction (HJ) complex. HJ DNA is sandwiched between 2 RuvA tetramers; dsDNA enters through RuvA and exits via RuvB. An RuvB hexamer assembles on each DNA strand where it exits the tetramer. Each RuvB hexamer is contacted by two RuvA subunits (via domain III) on 2 adjacent RuvB subunits; this complex drives branch migration. In the full resolvosome a probable DNA-RuvA(4)-RuvB(12)-RuvC(2) complex forms which resolves the HJ.

It localises to the cytoplasm. It catalyses the reaction ATP + H2O = ADP + phosphate + H(+). Functionally, the RuvA-RuvB-RuvC complex processes Holliday junction (HJ) DNA during genetic recombination and DNA repair, while the RuvA-RuvB complex plays an important role in the rescue of blocked DNA replication forks via replication fork reversal (RFR). RuvA specifically binds to HJ cruciform DNA, conferring on it an open structure. The RuvB hexamer acts as an ATP-dependent pump, pulling dsDNA into and through the RuvAB complex. RuvB forms 2 homohexamers on either side of HJ DNA bound by 1 or 2 RuvA tetramers; 4 subunits per hexamer contact DNA at a time. Coordinated motions by a converter formed by DNA-disengaged RuvB subunits stimulates ATP hydrolysis and nucleotide exchange. Immobilization of the converter enables RuvB to convert the ATP-contained energy into a lever motion, pulling 2 nucleotides of DNA out of the RuvA tetramer per ATP hydrolyzed, thus driving DNA branch migration. The RuvB motors rotate together with the DNA substrate, which together with the progressing nucleotide cycle form the mechanistic basis for DNA recombination by continuous HJ branch migration. Branch migration allows RuvC to scan DNA until it finds its consensus sequence, where it cleaves and resolves cruciform DNA. The sequence is that of Holliday junction branch migration complex subunit RuvB from Bartonella quintana (strain Toulouse) (Rochalimaea quintana).